The primary structure comprises 323 residues: UDP-N-acetylenolpyruvoylglucosamine reductase (323 aa).

The FAD-binding PCMH-type domain maps to 52–217; it reads KSGGAADWLF…VSARLQGEPG (166 aa). Residue arginine 197 is part of the active site. The interval 234–253 is disordered; the sequence is EQSQPVRTKTGGSTFKNPPG. A compositionally biased stretch (polar residues) spans 235–249; that stretch reads QSQPVRTKTGGSTFK. The active-site Proton donor is serine 246. Glutamate 316 is an active-site residue.

Belongs to the MurB family. Requires FAD as cofactor.

It is found in the cytoplasm. The enzyme catalyses UDP-N-acetyl-alpha-D-muramate + NADP(+) = UDP-N-acetyl-3-O-(1-carboxyvinyl)-alpha-D-glucosamine + NADPH + H(+). It functions in the pathway cell wall biogenesis; peptidoglycan biosynthesis. Cell wall formation. This Erythrobacter litoralis (strain HTCC2594) protein is UDP-N-acetylenolpyruvoylglucosamine reductase.